The chain runs to 373 residues: Securin (373 aa).

The segment covering 1 to 10 (MMPANEDKEN) has biased composition (basic and acidic residues). Positions 1–27 (MMPANEDKENNIVYTGNESSGINFPQT) are disordered. Polar residues predominate over residues 12–26 (IVYTGNESSGINFPQ). A D-box motif is present at residues 85-88 (RLPL). A disordered region spans residues 177–278 (ADSGKNEESS…LPYVPEGYSP (102 aa)). 4 positions are modified to phosphoserine: Ser185, Ser186, Ser212, and Ser213. Residues 185 to 194 (SSDDDEGNED) show a composition bias toward acidic residues. The span at 225 to 235 (LFNEQGGLQQL) shows a compositional bias: low complexity. The span at 240–256 (TKNEQKTKNDKSDKTDD) shows a compositional bias: basic and acidic residues. Ser277 carries the post-translational modification Phosphoserine. Ser292 bears the Phosphoserine; by CDC28 mark.

It belongs to the securin family. In terms of assembly, interacts with the caspase-like ESP1, and prevents its protease activity probably by covering its active site. Interacts with CDC20. Post-translationally, phosphorylated by CDC28. The phosphorylation may be important for ESP1 localization to the nucleus. In terms of processing, ubiquitinated by the anaphase promoting complex (APC) at the onset of anaphase, conducting to its degradation.

The protein localises to the cytoplasm. It localises to the nucleus. In terms of biological role, regulatory protein, which plays a central role in chromosome stability. Probably acts by blocking the action of key proteins. During the mitosis, it blocks Separase/ESP1 function, preventing the proteolysis of the cohesin complex and the subsequent segregation of the chromosomes. At the onset of anaphase, it is ubiquitinated, conducting to its destruction and to the liberation of ESP1. This Saccharomyces cerevisiae (strain ATCC 204508 / S288c) (Baker's yeast) protein is Securin (PDS1).